A 117-amino-acid chain; its full sequence is MSGNPDDDRLEELRQRKKEQLKQQQQGGDAEREAQQQQAQQAEQQKQAMLKQNLTDGARKRLNTIRMSKPEFAEQAEQQVLALAQSGRVQGRIDEDQMKEILRELKPDSQSFNINRR.

The interval 1–59 (MSGNPDDDRLEELRQRKKEQLKQQQQGGDAEREAQQQQAQQAEQQKQAMLKQNLTDGAR) is disordered. The segment covering 11-21 (EELRQRKKEQL) has biased composition (basic and acidic residues). The segment covering 35–48 (QQQQAQQAEQQKQA) has biased composition (low complexity).

This sequence belongs to the PDCD5 family.

This Halobacterium salinarum (strain ATCC 700922 / JCM 11081 / NRC-1) (Halobacterium halobium) protein is DNA-binding protein VNG_2008H.